The chain runs to 194 residues: Peptidyl-tRNA hydrolase (194 aa).

TRNA is bound at residue Y17. Catalysis depends on H22, which acts as the Proton acceptor. TRNA contacts are provided by Y68, N70, and N116.

This sequence belongs to the PTH family. As to quaternary structure, monomer.

It localises to the cytoplasm. The enzyme catalyses an N-acyl-L-alpha-aminoacyl-tRNA + H2O = an N-acyl-L-amino acid + a tRNA + H(+). Functionally, hydrolyzes ribosome-free peptidyl-tRNAs (with 1 or more amino acids incorporated), which drop off the ribosome during protein synthesis, or as a result of ribosome stalling. In terms of biological role, catalyzes the release of premature peptidyl moieties from peptidyl-tRNA molecules trapped in stalled 50S ribosomal subunits, and thus maintains levels of free tRNAs and 50S ribosomes. This chain is Peptidyl-tRNA hydrolase, found in Pseudomonas syringae pv. tomato (strain ATCC BAA-871 / DC3000).